Consider the following 241-residue polypeptide: Adapter protein MecA (241 aa).

Residues 115–141 (TDSNDKNNDDSSYMSDGNPADLNGYAN) form a disordered region.

This sequence belongs to the MecA family. In terms of assembly, homodimer.

Its function is as follows. Enables the recognition and targeting of unfolded and aggregated proteins to the ClpC protease or to other proteins involved in proteolysis. This chain is Adapter protein MecA, found in Pediococcus pentosaceus (strain ATCC 25745 / CCUG 21536 / LMG 10740 / 183-1w).